A 390-amino-acid chain; its full sequence is GTP 3',8-cyclase, mitochondrial (390 aa).

A mitochondrion-targeting transit peptide spans 1 to 45 (MRRCFSKITDCHLGFKNSNFLLVGSEVGSGSVTRTITTTTSERLF). One can recognise a Radical SAM core domain in the interval 69–290 (KFGRLHTYLR…PSIKRMQDHP (222 aa)). Arg-78 lines the GTP pocket. Residues Cys-85 and Cys-89 each coordinate [4Fe-4S] cluster. Tyr-91 provides a ligand contact to S-adenosyl-L-methionine. Cys-92 lines the [4Fe-4S] cluster pocket. Residue Arg-128 participates in GTP binding. Gly-132 provides a ligand contact to S-adenosyl-L-methionine. Thr-159 is a binding site for GTP. S-adenosyl-L-methionine is bound at residue Ser-183. Lys-220 provides a ligand contact to GTP. Position 254 (Met-254) interacts with S-adenosyl-L-methionine. The [4Fe-4S] cluster site is built by Cys-317 and Cys-320. 322-324 (RLR) is a GTP binding site. Cys-334 serves as a coordination point for [4Fe-4S] cluster.

This sequence belongs to the radical SAM superfamily. MoaA family. In terms of assembly, homodimer. It depends on [4Fe-4S] cluster as a cofactor. As to expression, expressed in all organs, with an abundant expression in the roots.

The protein resides in the mitochondrion matrix. The catalysed reaction is GTP + AH2 + S-adenosyl-L-methionine = (8S)-3',8-cyclo-7,8-dihydroguanosine 5'-triphosphate + 5'-deoxyadenosine + L-methionine + A + H(+). The protein operates within cofactor biosynthesis; molybdopterin biosynthesis. Its function is as follows. Catalyzes the cyclization of GTP to (8S)-3',8-cyclo-7,8-dihydroguanosine 5'-triphosphate. The chain is GTP 3',8-cyclase, mitochondrial (CNX2) from Arabidopsis thaliana (Mouse-ear cress).